A 741-amino-acid chain; its full sequence is Mitofusin-1 (741 aa).

Over 1–584 (MAEPVSPLKH…ASQEELMITL (584 aa)) the chain is Cytoplasmic. Residues 9–73 (KHFVLAKKAI…LSIIGEVLSR (65 aa)) are part of a helix bundle domain, formed by helices from N-terminal and C-terminal regions. Positions 72 to 321 (SRRHMKVAFF…ARLQEFQNFE (250 aa)) constitute a Dynamin-type G domain. Residues 82-89 (GRTSSGKS) are G1 motif. Residue 85-90 (SSGKSS) coordinates GTP. The segment at 108–109 (IT) is G2 motif. Residues 178–181 (DSPG) form a G3 motif region. Residue 237 to 240 (NRWD) coordinates GTP. Residues 237–240 (NRWD) are G4 motif. Glu266 is a region of interest (G5 motif). GTP is bound by residues Ser284 and Lys286. Residues 338-364 (EQHTIRAKQILATVKNIMDSVNLAAED) form a part of a helix bundle domain, formed by helices from N-terminal and C-terminal regions region. Residues 371–408 (EEREDQIDRLDFIRNQMNLLTLDVKKKIKEVTEEVANK) are a coiled coil. The chain crosses the membrane as a helical span at residues 585-605 (VTGLASVTSRTSMGIIIVGGV). Residues 606 to 608 (IWK) are Mitochondrial intermembrane-facing. The helical transmembrane segment at 609–629 (TIGWKLLSVSLTMYGALYLYE) threads the bilayer. Over 630–741 (RLSWTTHAKE…QFLPSSNEES (112 aa)) the chain is Cytoplasmic. Residues 679 to 734 (RLCQQVDITQKQLEEEIARLPKEIDQLEKIQNNSKLLRNKAVQLENELENFTKQFL) adopt a coiled-coil conformation. Residues 703–734 (DQLEKIQNNSKLLRNKAVQLENELENFTKQFL) form a part of a helix bundle domain, formed by helices from N-terminal and C-terminal regions region.

This sequence belongs to the TRAFAC class dynamin-like GTPase superfamily. Dynamin/Fzo/YdjA family. Mitofusin subfamily. As to quaternary structure, homodimer, also in the absence of bound GTP. Forms higher oligomers in the presence of a transition state GTP analog. Forms homomultimers and heteromultimers with MFN2. Oligomerization is essential for mitochondrion fusion. Component of a high molecular weight multiprotein complex. Interacts with VAT1. Interacts with THG1L; THG1L probably functions as a guanyl-nucleotide exchange factor/GEF, activating MFN1. In terms of processing, ubiquitinated by non-degradative ubiquitin by PRKN. Deubiquitination by USP30 inhibits mitochondrial fusion. Ubiquitinated by MARCHF5. When mitochondria are depolarized and dysfunctional, it is ubiquitinated by a SCF (SKP1-CUL1-F-box protein) E3 ubiquitin-protein ligase complex that contains FBXO7 and PRKN. Detected in kidney and heart (at protein level). Ubiquitous. Expressed at slightly higher level in kidney and heart. Isoform 2 may be overexpressed in some tumors, such as lung cancers.

Its subcellular location is the mitochondrion outer membrane. It is found in the cytoplasm. It carries out the reaction GTP + H2O = GDP + phosphate + H(+). Its function is as follows. Mitochondrial outer membrane GTPase that mediates mitochondrial clustering and fusion. Membrane clustering requires GTPase activity. It may involve a major rearrangement of the coiled coil domains. Mitochondria are highly dynamic organelles, and their morphology is determined by the equilibrium between mitochondrial fusion and fission events. Overexpression induces the formation of mitochondrial networks (in vitro). Has low GTPase activity. The sequence is that of Mitofusin-1 (MFN1) from Homo sapiens (Human).